A 456-amino-acid chain; its full sequence is N(6)-adenosine-methyltransferase non-catalytic subunit METTL14 (456 aa).

Residues 39-51 (DEQREIAETRETS) show a composition bias toward basic and acidic residues. A disordered region spans residues 39–74 (DEQREIAETRETSRASYDTSATVSKRKMPEEGEADE). The span at 52-61 (RASYDTSATV) shows a compositional bias: polar residues. 2 interaction with METTL3 regions span residues 135–136 (RD) and 237–238 (SG). The interval 245 to 254 (RMCLRKWGFR) is positively charged region required for RNA-binding. Interaction with METTL3 stretches follow at residues 255–258 (RSED) and 278–287 (KAIFQRTKEH). The segment at 297–298 (HR) is positively charged region required for RNA-binding. The interaction with METTL3 stretch occupies residues 308-312 (NVDID). Residues 395–456 (LRPKTPPPKS…GPHRGVFAPR (62 aa)) form a disordered region. Positions 410–421 (ASRGGGRGGPSA) are enriched in gly residues. The segment covering 423 to 441 (RGERGRERNRGSFRGDRGN) has biased composition (basic and acidic residues).

Belongs to the MT-A70-like family. As to quaternary structure, heterodimer; heterodimerizes with mettl3 to form an antiparallel heterodimer that constitutes an active methyltransferase. Component of the WMM complex, a N6-methyltransferase complex composed of a catalytic subcomplex, named MAC, and of an associated subcomplex, named MACOM. The MAC subcomplex is composed of mettl3 and mettl14.

The protein resides in the nucleus. Its function is as follows. The METTL3-METTL14 heterodimer forms a N6-methyltransferase complex that methylates adenosine residues at the N(6) position of some mRNAs and regulates the circadian clock, differentiation of embryonic stem cells and cortical neurogenesis. In the heterodimer formed with mettl3, mettl14 constitutes the RNA-binding scaffold that recognizes the substrate rather than the catalytic core. N6-methyladenosine (m6A), which takes place at the 5'-[AG]GAC-3' consensus sites of some mRNAs, plays a role in mRNA stability and processing. The protein is N(6)-adenosine-methyltransferase non-catalytic subunit METTL14 (mettl14) of Xenopus tropicalis (Western clawed frog).